The following is a 108-amino-acid chain: uncharacterized protein (108 aa).

Positions 39 to 68 are enriched in low complexity; the sequence is GLRSRSGTGSGNSRNGLKESGGSRSGPGKP. Residues 39 to 95 form a disordered region; sequence GLRSRSGTGSGNSRNGLKESGGSRSGPGKPRGNRKSSRRIRPRPTSEKPRGYWRSSW. Basic residues predominate over residues 69-80; the sequence is RGNRKSSRRIRP.

This is an uncharacterized protein from Acidithiobacillus ferridurans.